The sequence spans 2290 residues: Protein Ycf2 (2290 aa).

1644 to 1651 (GSIGTGRS) contacts ATP.

The protein belongs to the Ycf2 family.

The protein resides in the plastid. It localises to the chloroplast stroma. Functionally, probable ATPase of unknown function. Its presence in a non-photosynthetic plant (Epifagus virginiana) and experiments in tobacco indicate that it has an essential function which is probably not related to photosynthesis. The chain is Protein Ycf2 from Nasturtium officinale (Watercress).